Reading from the N-terminus, the 153-residue chain is Endoribonuclease YbeY (153 aa).

His-114, His-118, and His-124 together coordinate Zn(2+).

This sequence belongs to the endoribonuclease YbeY family. The cofactor is Zn(2+).

The protein resides in the cytoplasm. Functionally, single strand-specific metallo-endoribonuclease involved in late-stage 70S ribosome quality control and in maturation of the 3' terminus of the 16S rRNA. The polypeptide is Endoribonuclease YbeY (Shewanella amazonensis (strain ATCC BAA-1098 / SB2B)).